Here is a 509-residue protein sequence, read N- to C-terminus: Cytochrome P450 monooxygenase FUP2 (509 aa).

Helical transmembrane passes span 16–36 and 224–244; these read FGLALVISALALVSVIIYGCF and MVEALSFFLTLPGIASVFGIA. Cys450 provides a ligand contact to heme.

The protein belongs to the cytochrome P450 family. The cofactor is heme.

Its subcellular location is the membrane. The protein operates within secondary metabolite biosynthesis. Cytochrome P450 monooxygenase; part of the gene cluster that mediates the biosynthesis of the mycotoxin fusaproliferin (FUP) that belongs to the class of bicyclic sesterterpenoids. FUP2 introduces a hydroxyl group at the C-24 position resulting in the formation of preterpestacin IIa, which can be further oxidized. The oxidation of the hydroxyl group at C-24 to an aldehyde and further to a carboxylic group takes place via unspecific alcohol and aldehyde dehydrogenases and leads to the shunt products preterpestacin IIc and preterpestacin IIb, respectively. The FUP biosynthetic pathway starts with the enzyme encoded by FUP1 that combines a C-terminal prenyltransferase domain responsible for the synthesis of geranylgeranyl diphosphate with the N-terminal terpene cyclase domain, to yield preterpestacin I. Preterpestacin I is then decorated by oxygenation steps that are catalyzed by two cytochrome P450 monooxygenases. First, FUP2 introduces a hydroxyl group at the C-24 position resulting in the formation of preterpestacin IIa. The second P450 monooxygenase catalyzes the hydroxylation at C-16 and C-17 of preterpestacin IIa, producing preterpestacin III. Subsequently, the FAD-dependent oxidoreductase FUP4 catalyzes the oxidation of the hydroxy group at the C-16 position to a keto group, leading to the formation of (-)-terpestacin, which is the immediate precursor of FUP. The final step in the proposed biosynthetic pathway is the addition of an acetyl group at the C-24 position of terpestacin, which is catalyzed by the acetyltransferase FUP5. This chain is Cytochrome P450 monooxygenase FUP2, found in Fusarium proliferatum (strain ET1) (Orchid endophyte fungus).